A 241-amino-acid polypeptide reads, in one-letter code: ATP synthase subunit 4, mitochondrial (241 aa).

Residues 1 to 35 (MASRLARTAVGAARLRPSVVPRVLPALSTVASPRY) constitute a mitochondrion transit peptide.

The protein belongs to the eukaryotic ATPase B chain family. F-type ATPases have 2 components, CF(1) - the catalytic core - and CF(0) - the membrane proton channel. In yeast, the dimeric form of ATP synthase consists of 17 polypeptides: alpha, beta, gamma, delta, epsilon, 4 (B), 5 (OSCP), 6 (A), 8, 9 (C), d, E (Tim11), f, g, h, i/j and k.

Its subcellular location is the mitochondrion. It is found in the mitochondrion inner membrane. Its function is as follows. Mitochondrial membrane ATP synthase (F(1)F(0) ATP synthase or Complex V) produces ATP from ADP in the presence of a proton gradient across the membrane which is generated by electron transport complexes of the respiratory chain. F-type ATPases consist of two structural domains, F(1) - containing the extramembraneous catalytic core, and F(0) - containing the membrane proton channel, linked together by a central stalk and a peripheral stalk. During catalysis, ATP synthesis in the catalytic domain of F(1) is coupled via a rotary mechanism of the central stalk subunits to proton translocation. Part of the complex F(0) domain and the peripheric stalk, which acts as a stator to hold the catalytic alpha(3)beta(3) subcomplex and subunit a/atp6 static relative to the rotary elements. In Neurospora crassa (strain ATCC 24698 / 74-OR23-1A / CBS 708.71 / DSM 1257 / FGSC 987), this protein is ATP synthase subunit 4, mitochondrial (atp-3).